A 145-amino-acid chain; its full sequence is Large ribosomal subunit protein bL17 (145 aa).

The protein belongs to the bacterial ribosomal protein bL17 family. Part of the 50S ribosomal subunit. Contacts protein L32.

The protein is Large ribosomal subunit protein bL17 of Orientia tsutsugamushi (strain Boryong) (Rickettsia tsutsugamushi).